A 337-amino-acid polypeptide reads, in one-letter code: SH3 and cysteine-rich domain-containing protein 3 (337 aa).

A compositionally biased stretch (basic and acidic residues) spans 1 to 11 (MFKKKAKEEKP). Disordered stretches follow at residues 1-61 (MFKK…KPHK) and 162-215 (NKER…NKKA). The span at 35-48 (ESEEEEEEEEEEPP) shows a compositional bias: acidic residues. Residues 59–110 (PHKFKDHYLKKPKFCDVCARMIVLNNKFGLRCKNCKTNIHHHCQSYVEFQKC) form a Phorbol-ester/DAG-type zinc finger. Basic and acidic residues-rich tracts occupy residues 167–176 (KGQDDKKNPM) and 184–212 (LPPK…DAKN). 2 consecutive SH3 domains span residues 220-279 (MQSH…RVRA) and 280-337 (AERV…LQEI).

Component of a calcium channel complex with CACNA1S.

Its subcellular location is the cytoplasm. It is found in the cell membrane. The protein resides in the sarcolemma. It localises to the T-tubule. Functionally, required for normal excitation-contraction coupling in skeletal muscle and for normal muscle contraction in response to membrane depolarization. Required for normal Ca(2+) release from the sarcplasmic reticulum, which ultimately leads to muscle contraction. Probably functions via its effects on muscle calcium channels. Increases CACNA1S channel activity, in addition to its role in enhancing the expression of CACNA1S at the cell membrane. Has a redundant role in promoting the expression of the calcium channel CACNA1S at the cell membrane. The polypeptide is SH3 and cysteine-rich domain-containing protein 3 (stac3) (Xenopus tropicalis (Western clawed frog)).